Here is a 104-residue protein sequence, read N- to C-terminus: Large ribosomal subunit protein bL21 (104 aa).

It belongs to the bacterial ribosomal protein bL21 family. As to quaternary structure, part of the 50S ribosomal subunit. Contacts protein L20.

In terms of biological role, this protein binds to 23S rRNA in the presence of protein L20. This chain is Large ribosomal subunit protein bL21, found in Francisella tularensis subsp. holarctica (strain FTNF002-00 / FTA).